The primary structure comprises 482 residues: Ribosomal RNA small subunit methyltransferase F (482 aa).

S-adenosyl-L-methionine contacts are provided by residues 119 to 125 (ASAPGSK), Glu-143, Asp-170, and Asp-188. The active-site Nucleophile is Cys-241.

Belongs to the class I-like SAM-binding methyltransferase superfamily. RsmB/NOP family.

Its subcellular location is the cytoplasm. The enzyme catalyses cytidine(1407) in 16S rRNA + S-adenosyl-L-methionine = 5-methylcytidine(1407) in 16S rRNA + S-adenosyl-L-homocysteine + H(+). Its function is as follows. Specifically methylates the cytosine at position 1407 (m5C1407) of 16S rRNA. The sequence is that of Ribosomal RNA small subunit methyltransferase F from Shewanella sp. (strain ANA-3).